Here is a 117-residue protein sequence, read N- to C-terminus: Cell division protein FtsL (117 aa).

The Cytoplasmic portion of the chain corresponds to 1 to 35 (MSNLAYQPEKQQRHAISPEKKVIVKKRASITLGEK). Residues 36 to 56 (VLLVLFAAAVLSVSLLIVSKA) traverse the membrane as a helical segment. Residues 57–117 (YAAYQTNIEV…KDKKVKNIQE (61 aa)) are Extracellular-facing.

The protein belongs to the FtsL family. In terms of assembly, monomer. Interacts with DivIB and DivIC. Interaction with DivIC stabilizes FtsL against RasP cleavage. In terms of processing, cleaved by RasP. Cleavage is important for turnover and function of FtsL.

The protein resides in the cell membrane. Functionally, essential cell division protein that may play a structural role. Probably involved in the regulation of the timing of cell division. Also required for sporulation. This Bacillus subtilis (strain 168) protein is Cell division protein FtsL.